Reading from the N-terminus, the 282-residue chain is ATP phosphoribosyltransferase (282 aa).

Belongs to the ATP phosphoribosyltransferase family. Long subfamily. Requires Mg(2+) as cofactor.

It is found in the cytoplasm. The enzyme catalyses 1-(5-phospho-beta-D-ribosyl)-ATP + diphosphate = 5-phospho-alpha-D-ribose 1-diphosphate + ATP. Its pathway is amino-acid biosynthesis; L-histidine biosynthesis; L-histidine from 5-phospho-alpha-D-ribose 1-diphosphate: step 1/9. Its activity is regulated as follows. Feedback inhibited by histidine. In terms of biological role, catalyzes the condensation of ATP and 5-phosphoribose 1-diphosphate to form N'-(5'-phosphoribosyl)-ATP (PR-ATP). Has a crucial role in the pathway because the rate of histidine biosynthesis seems to be controlled primarily by regulation of HisG enzymatic activity. This is ATP phosphoribosyltransferase from Pyrobaculum aerophilum (strain ATCC 51768 / DSM 7523 / JCM 9630 / CIP 104966 / NBRC 100827 / IM2).